A 462-amino-acid polypeptide reads, in one-letter code: MDLLRNIPDELICHILSFLTTKEAALTSVLSKRWRNLLAFVSNLHIDDSIFLHPEEGKRDRNEIRQSFLDFVGRILALQGNCPVKKVSIKFLFKLDSDRVDGWISNVLARGVSELDLSIDLCMDEYFLLSSKRFESKNLVRLKLHRLCIGQREKTVGWLAGEIFLPMLKTLELDYVGFYGDLLFLRALPALEELVIVDAFWFTTFTDVTVSNPSLKTLTMSSNIYSGSISFDTPSLVYFSHFKYVAKDYPLVNMENLLEARINLGVTEGQIRRAREPNNNDEVVLRFPNVGKLMNGIRNVQCLDLSANTLEMLSLSCESMPVFKNLKSLSIKSAENRGWQAMPVLLRNCPHLETLVLEGLLHFVTDKCGDACDCVSREEKGRSLTSCPVKTLEIKEFHGTMEEMYMITHFLDYFPCLKELKIYIEGNDHAQREVSEVIAEKIKLYNKSSSSNVQLMVSGYHE.

In terms of domain architecture, F-box spans 1–47 (MDLLRNIPDELICHILSFLTTKEAALTSVLSKRWRNLLAFVSNLHID). 5 LRR repeats span residues 118-146 (SIDLCMDEYFLLSSKRFESKNLVRLKLHR), 148-175 (CIGQREKTVGWLAGEIFLPMLKTLELDY), 197-222 (VDAFWFTTFTDVTVSNPSLKTLTMSS), 302-333 (CLDLSANTLEMLSLSCESMPVFKNLKSLSIKS), and 334-359 (AENRGWQAMPVLLRNCPHLETLVLEG).

This is F-box/LRR-repeat protein At5g38396 from Arabidopsis thaliana (Mouse-ear cress).